The sequence spans 101 residues: uncharacterized protein (101 aa).

This is an uncharacterized protein from Mycobacterium tuberculosis (strain CDC 1551 / Oshkosh).